A 357-amino-acid chain; its full sequence is Glucose-6-phosphatase catalytic subunit 1 (357 aa).

The Lumenal portion of the chain corresponds to 1-28; the sequence is MEKGMNVLHDFGIQSTHYLQVNYQNSQD. Residues 29–49 form a helical membrane-spanning segment; sequence WFILVSVIADLRNAFYVLFPI. Residues 50 to 60 lie on the Cytoplasmic side of the membrane; sequence WFHLREAVGIK. A helical transmembrane segment spans residues 61–81; that stretch reads LLWVAVIGDWLNLVFKWILFG. The Lumenal segment spans residues 82–117; the sequence is QRPYWWVLDTDYYSNTSAPLIKQFPVTCETGPGSPS. Substrate is bound at residue arginine 83. Asparagine 96 carries an N-linked (GlcNAc...) asparagine glycan. Residues 118-138 traverse the membrane as a helical segment; the sequence is GHAMGTAGVYYVMVTSTLSIF. The active-site Proton donor is the histidine 119. Over 139–147 the chain is Cytoplasmic; that stretch reads RGKKKPTYR. Residues 148 to 168 traverse the membrane as a helical segment; it reads FRCLNVMLWLGFWVVQLNVCL. At 169 to 170 the chain is on the lumenal side; sequence SR. A substrate-binding site is contributed by arginine 170. The helical transmembrane segment at 171-191 threads the bilayer; it reads IYLAAHFPHQVVAGVLSGIAV. Histidine 176 acts as the Nucleophile in catalysis. The Cytoplasmic segment spans residues 192–209; that stretch reads AETFRHIQSIYNASLKKY. Residues 210 to 230 form a helical membrane-spanning segment; the sequence is FLITCFLFSFAIGFYLLLKWL. The Lumenal segment spans residues 231-254; sequence GVDLLWTLEKAKRRCERPEWVHID. The chain crosses the membrane as a helical span at residues 255–275; that stretch reads TTPFASLLKNLGTLFGLGLAL. The Cytoplasmic segment spans residues 276-291; it reads NSSMYRESCKGKLSKW. The helical transmembrane segment at 292-312 threads the bilayer; sequence FPFRLSCIVASLVLLHLFDSL. At 313-320 the chain is on the lumenal side; sequence KPPSQIEL. Residues 321-341 form a helical membrane-spanning segment; that stretch reads IFYVLSFCKSAAVPLASVSLI. The Cytoplasmic portion of the chain corresponds to 342–357; it reads PYCLAWVLGQPNKKTV. The short motif at 354–357 is the Prevents secretion from ER element; sequence KKTV.

Belongs to the glucose-6-phosphatase family.

It localises to the endoplasmic reticulum membrane. The catalysed reaction is D-glucose 6-phosphate + H2O = D-glucose + phosphate. It functions in the pathway carbohydrate biosynthesis; gluconeogenesis. Hydrolyzes glucose-6-phosphate to glucose in the endoplasmic reticulum. Forms with the glucose-6-phosphate transporter (SLC37A4/G6PT) the complex responsible for glucose production in the terminal step of glycogenolysis and gluconeogenesis. Hence, it is the key enzyme in homeostatic regulation of blood glucose levels. The chain is Glucose-6-phosphatase catalytic subunit 1 (G6PC1) from Bos taurus (Bovine).